We begin with the raw amino-acid sequence, 128 residues long: Nucleoside diphosphate kinase B (128 aa).

N-acetylmethionine is present on M1. Residues K9, F39, T70, R81, and N91 each coordinate ATP. The active-site Pros-phosphohistidine intermediate is the H94.

The protein belongs to the NDK family. Mg(2+) serves as cofactor.

The protein resides in the cytoplasm. It is found in the nucleus. It localises to the cell projection. Its subcellular location is the lamellipodium. The protein localises to the ruffle. The enzyme catalyses a 2'-deoxyribonucleoside 5'-diphosphate + ATP = a 2'-deoxyribonucleoside 5'-triphosphate + ADP. It catalyses the reaction a ribonucleoside 5'-diphosphate + ATP = a ribonucleoside 5'-triphosphate + ADP. Functionally, major role in the synthesis of nucleoside triphosphates other than ATP. This Merluccius bilinearis (Silver hake) protein is Nucleoside diphosphate kinase B (nme2).